We begin with the raw amino-acid sequence, 80 residues long: Putative defensin-like protein 15 (80 aa).

The N-terminal stretch at 1–29 is a signal peptide; sequence MAKFASIITFIYAALVLFAAFEVPTMVEA. Q30 is modified (pyrrolidone carboxylic acid). Intrachain disulfides connect C33–C80, C44–C65, C50–C74, and C54–C76.

Belongs to the DEFL family.

The protein resides in the secreted. Confers broad-spectrum resistance to pathogens. This chain is Putative defensin-like protein 15 (PDF1.2B), found in Arabidopsis thaliana (Mouse-ear cress).